Reading from the N-terminus, the 222-residue chain is Deoxyribose-phosphate aldolase (222 aa).

D89 (proton donor/acceptor) is an active-site residue. K151 acts as the Schiff-base intermediate with acetaldehyde in catalysis. The Proton donor/acceptor role is filled by K180.

It belongs to the DeoC/FbaB aldolase family. DeoC type 1 subfamily.

Its subcellular location is the cytoplasm. The enzyme catalyses 2-deoxy-D-ribose 5-phosphate = D-glyceraldehyde 3-phosphate + acetaldehyde. The protein operates within carbohydrate degradation; 2-deoxy-D-ribose 1-phosphate degradation; D-glyceraldehyde 3-phosphate and acetaldehyde from 2-deoxy-alpha-D-ribose 1-phosphate: step 2/2. Its function is as follows. Catalyzes a reversible aldol reaction between acetaldehyde and D-glyceraldehyde 3-phosphate to generate 2-deoxy-D-ribose 5-phosphate. This is Deoxyribose-phosphate aldolase from Acholeplasma laidlawii (strain PG-8A).